Reading from the N-terminus, the 189-residue chain is Protein GrpE (189 aa).

Residues 1–10 are compositionally biased toward polar residues; sequence MADEQQQTLD. Residues 1 to 21 form a disordered region; it reads MADEQQQTLDPQAPEQTDAPE.

It belongs to the GrpE family. In terms of assembly, homodimer.

It localises to the cytoplasm. Its function is as follows. Participates actively in the response to hyperosmotic and heat shock by preventing the aggregation of stress-denatured proteins, in association with DnaK and GrpE. It is the nucleotide exchange factor for DnaK and may function as a thermosensor. Unfolded proteins bind initially to DnaJ; upon interaction with the DnaJ-bound protein, DnaK hydrolyzes its bound ATP, resulting in the formation of a stable complex. GrpE releases ADP from DnaK; ATP binding to DnaK triggers the release of the substrate protein, thus completing the reaction cycle. Several rounds of ATP-dependent interactions between DnaJ, DnaK and GrpE are required for fully efficient folding. This Pseudomonas paraeruginosa (strain DSM 24068 / PA7) (Pseudomonas aeruginosa (strain PA7)) protein is Protein GrpE.